The sequence spans 450 residues: MSHSACPKPATARHSQALTGEIRIPGDKSISHRSFMFGGLASGKTRITGLLEGEDVINTGRAMQAMGARIRKEGDVWIINGVGNGCLLQPEAPLDFGNAGTGARLTMGLVGTYDMKTSFIGDASLSKRPMGRVLNPLREMGVQVEAAEGDRMPLTLIGPRTANPIAYRVPMASAQVKSAVLLAGLNTPGVTTVIEPVMTRDHTEKMLQGFGADLTVETDKDGVRHIRIVGQGKLTGQTIDVPGDPSSTAFPLVAALLVEGSDVTIRNVLMNPTRTGLILTLQEMGADIEIIDPRLAGGEDVADLRVKASKLKGVVVPPERAPSMIDEYPVLAIAASFAEGETVMDGLDELRVKESDRLAAVARGLEANGVDCTEGEMSLTVRGRPGGKGLGGGTVATHLDHRIAMSFLVMGLASEKPVTVDDSTMIATSFPEFMGMMAGLGAKIAESGAE.

3-phosphoshikimate is bound by residues K28, S29, and R33. Residue K28 coordinates phosphoenolpyruvate. Residues G100 and R128 each coordinate phosphoenolpyruvate. The 3-phosphoshikimate site is built by S173, Q175, D326, and K353. Q175 serves as a coordination point for phosphoenolpyruvate. The active-site Proton acceptor is D326. The phosphoenolpyruvate site is built by R357 and R402.

The protein belongs to the EPSP synthase family. In terms of assembly, monomer.

Its subcellular location is the cytoplasm. It catalyses the reaction 3-phosphoshikimate + phosphoenolpyruvate = 5-O-(1-carboxyvinyl)-3-phosphoshikimate + phosphate. Its pathway is metabolic intermediate biosynthesis; chorismate biosynthesis; chorismate from D-erythrose 4-phosphate and phosphoenolpyruvate: step 6/7. Catalyzes the transfer of the enolpyruvyl moiety of phosphoenolpyruvate (PEP) to the 5-hydroxyl of shikimate-3-phosphate (S3P) to produce enolpyruvyl shikimate-3-phosphate and inorganic phosphate. This is 3-phosphoshikimate 1-carboxyvinyltransferase from Brucella melitensis biotype 2 (strain ATCC 23457).